Consider the following 65-residue polypeptide: Metallothionein-B (65 aa).

The protein belongs to the metallothionein superfamily. Type 4 family.

Its function is as follows. Metallothioneins have a high content of cysteine residues that bind various heavy metals. The polypeptide is Metallothionein-B (MTB1) (Strongylocentrotus purpuratus (Purple sea urchin)).